Here is a 139-residue protein sequence, read N- to C-terminus: Large ribosomal subunit protein bL17 (139 aa).

Belongs to the bacterial ribosomal protein bL17 family. As to quaternary structure, part of the 50S ribosomal subunit. Contacts protein L32.

The sequence is that of Large ribosomal subunit protein bL17 from Sphingopyxis alaskensis (strain DSM 13593 / LMG 18877 / RB2256) (Sphingomonas alaskensis).